A 943-amino-acid polypeptide reads, in one-letter code: MTDYKATLNLPETAFPMKAGLPQREPETLKFWNDIGLYQKLRAIGGDRPKFVLHDGPPYANGSIHIGHAVNKILKDIIVRSKTLAGYDAPYVPGWDCHGLPIEHKVETTHGKNLPADKTRELCREYAAEQIEGQKADFIRLGVLGEWDNPYKTMNFANEANEIRALAEMVKQDFVFKGLKPVNWCFDCGSALAEAEVEYADKKSPTIDVGFPVADADKLAAAFGLAALDKPAQIVIWTTTPWTIPANQALNVHPEIDYALVDAGDRYLVLAEALVESCLARYQREGKVVATAKGEALELINFRHPFYERLSPVYLADYVALDAGTGIVHSSPAYGEDDFYTCKRYGMSNDDILSPVQSNGVYVDSLPFFGGQFIWKANPNVVAKLEEVGSLLAHETINHSYMHCWRHKTPLIYRATAQWFVGMDKQPRQGASLRERALEAITQTEFVPGWGQARLHGMIAGRPDWCISRQRNWGVPIPFFLHKASGELHPRTVELMEEVAQRVEKEGIEAWFKLDAAELLGEDAAQYEKINDTLDVWFDSGTTHWHVLRGSHRIGHASGPVADLYLEGSDQHRGWFHSSLLTGCAIDNHAPYRQLLTHGFTVDESGRKMSKSLGNTVVPQTVIDTLGADILRLWVASTDYSGEIAVSQQILQRSADAYRRIRNTTRFLLSNLNGFDPATDLLPPQEMLALDRWAVDRALLLQREIEEAYREYRFWNVYSKVHNFCVQELGGFYLDIIKDRQYTTGANSVARRSCQTALFHIAEALVRWIAPILAFTAEEVWKFLPGERAESVMLATWYDGLSELPADVTLNRQYWEQVMAVKAAVNKELENQRAAKAVGGNLQAEVTLYAEDALQVQLAKLGNELRFVLITSTATLAPLSAAPADAVDSEVAGLKLKVVKSTHAKCGRCWHHREDVGQHAAHPDLCGRCIENIEGSGEVRHYA.

Residues 58–68 carry the 'HIGH' region motif; the sequence is PYANGSIHIGH. Residue glutamate 567 participates in L-isoleucyl-5'-AMP binding. A 'KMSKS' region motif is present at residues 608–612; that stretch reads KMSKS. Lysine 611 lines the ATP pocket. Zn(2+) is bound by residues cysteine 906, cysteine 909, cysteine 926, and cysteine 929.

Belongs to the class-I aminoacyl-tRNA synthetase family. IleS type 1 subfamily. In terms of assembly, monomer. Requires Zn(2+) as cofactor.

It localises to the cytoplasm. It carries out the reaction tRNA(Ile) + L-isoleucine + ATP = L-isoleucyl-tRNA(Ile) + AMP + diphosphate. Its function is as follows. Catalyzes the attachment of isoleucine to tRNA(Ile). As IleRS can inadvertently accommodate and process structurally similar amino acids such as valine, to avoid such errors it has two additional distinct tRNA(Ile)-dependent editing activities. One activity is designated as 'pretransfer' editing and involves the hydrolysis of activated Val-AMP. The other activity is designated 'posttransfer' editing and involves deacylation of mischarged Val-tRNA(Ile). The protein is Isoleucine--tRNA ligase of Pseudomonas aeruginosa (strain LESB58).